We begin with the raw amino-acid sequence, 268 residues long: Mediator of RNA polymerase II transcription subunit 8-A (268 aa).

2 coiled-coil regions span residues 1–26 and 117–160; these read MQRE…KNSL and VEEL…EERE. The disordered stretch occupies residues 190–268; sequence GLSNRRPPGQ…KSASMHPYQR (79 aa). Over residues 223–246 the composition is skewed to polar residues; sequence VPMSLQSNQQQQHMAGVSMSQGNQ.

This sequence belongs to the Mediator complex subunit 8 family. Component of the Mediator complex. May be part of a multisubunit E3 ubiquitin-protein ligase complex.

It localises to the nucleus. It participates in protein modification; protein ubiquitination. In terms of biological role, component of the Mediator complex, a coactivator involved in the regulated transcription of nearly all RNA polymerase II-dependent genes. Mediator functions as a bridge to convey information from gene-specific regulatory proteins to the basal RNA polymerase II transcription machinery. Mediator is recruited to promoters by direct interactions with regulatory proteins and serves as a scaffold for the assembly of a functional preinitiation complex with RNA polymerase II and the general transcription factors. May play a role as a target recruitment subunit in E3 ubiquitin-protein ligase complexes and thus in ubiquitination and subsequent proteasomal degradation of target proteins. This is Mediator of RNA polymerase II transcription subunit 8-A (med8-a) from Xenopus laevis (African clawed frog).